Here is a 690-residue protein sequence, read N- to C-terminus: Elongation factor G (690 aa).

The region spanning 8 to 283 (EDYRNFGIMA…AVVDYLPSPV (276 aa)) is the tr-type G domain. GTP contacts are provided by residues 17–24 (AHIDAGKT), 81–85 (DTPGH), and 135–138 (NKMD).

It belongs to the TRAFAC class translation factor GTPase superfamily. Classic translation factor GTPase family. EF-G/EF-2 subfamily.

It is found in the cytoplasm. Its function is as follows. Catalyzes the GTP-dependent ribosomal translocation step during translation elongation. During this step, the ribosome changes from the pre-translocational (PRE) to the post-translocational (POST) state as the newly formed A-site-bound peptidyl-tRNA and P-site-bound deacylated tRNA move to the P and E sites, respectively. Catalyzes the coordinated movement of the two tRNA molecules, the mRNA and conformational changes in the ribosome. This Rhodopseudomonas palustris (strain BisB18) protein is Elongation factor G.